The following is a 38-amino-acid chain: Photosystem II reaction center protein L (38 aa).

Residues 17–37 (SLYFGLLLIFVLAVLFSSYIF) form a helical membrane-spanning segment.

It belongs to the PsbL family. PSII is composed of 1 copy each of membrane proteins PsbA, PsbB, PsbC, PsbD, PsbE, PsbF, PsbH, PsbI, PsbJ, PsbK, PsbL, PsbM, PsbT, PsbX, PsbY, PsbZ, Psb30/Ycf12, at least 3 peripheral proteins of the oxygen-evolving complex and a large number of cofactors. It forms dimeric complexes.

It localises to the plastid. The protein resides in the chloroplast thylakoid membrane. In terms of biological role, one of the components of the core complex of photosystem II (PSII). PSII is a light-driven water:plastoquinone oxidoreductase that uses light energy to abstract electrons from H(2)O, generating O(2) and a proton gradient subsequently used for ATP formation. It consists of a core antenna complex that captures photons, and an electron transfer chain that converts photonic excitation into a charge separation. This subunit is found at the monomer-monomer interface and is required for correct PSII assembly and/or dimerization. This is Photosystem II reaction center protein L from Chlamydomonas moewusii (Chlamydomonas eugametos).